The primary structure comprises 141 residues: Short-chain diamines transporter (141 aa).

4 helical membrane passes run 16 to 36 (VILLVIIAIALSFIFDVPLEV), 39 to 59 (TLGIVMAVTSVFWNMIFNHFF), 76 to 96 (ILHAIGFEGGLMLVTIPMVAY), and 103 to 123 (WQAIVLDFGLTMCILVYTFIF).

It belongs to the proteobacterial antimicrobial compound efflux (PACE) (TC 2.A.117) family.

The protein localises to the cell inner membrane. Functionally, mediates the efflux of short-chain diamines when energized by an electrochemical gradient. Involved in resistance to the synthetic biocide chlorhexidine, a widely used antiseptic and disinfectant in both hospital and community settings. Interacts directly with chlorhexidine and mediates its efflux via an energy-dependent mechanism. In Acinetobacter baylyi (strain ATCC 33305 / BD413 / ADP1), this protein is Short-chain diamines transporter.